The following is a 107-amino-acid chain: ATPase inhibitor, mitochondrial (107 aa).

The transit peptide at 1–25 (MAGSALAVRARLGVWGMRVLQTRGF) directs the protein to the mitochondrion. The interval 25–58 (FGSDSSESMDSGAGSIREAGGAFGKREKAEEDRY) is disordered. Residues 26–52 (GSDSSESMDSGAGSIREAGGAFGKREK) form an N-terminal inhibitory region region. S39 is modified (phosphoserine). Positions 48 to 58 (GKREKAEEDRY) are enriched in basic and acidic residues. The stretch at 60 to 107 (REKTREQLAALKKHHEDEIDHHSKEIERLQKQIERHKKKIKYLKNSEH) forms a coiled coil. The antiparallel alpha-helical coiled coil region stretch occupies residues 74 to 106 (HEDEIDHHSKEIERLQKQIERHKKKIKYLKNSE). K103 is subject to N6-succinyllysine.

The protein belongs to the ATPase inhibitor family. In terms of assembly, homodimer; represents the active form and is present at a pH value below 6.5. Homotetramer; represents the inactive form and is present at a pH value above 7.0.

Its subcellular location is the mitochondrion. Its function is as follows. Endogenous F(1)F(o)-ATPase inhibitor limiting ATP depletion when the mitochondrial membrane potential falls below a threshold and the F(1)F(o)-ATP synthase starts hydrolyzing ATP to pump protons out of the mitochondrial matrix. Required to avoid the consumption of cellular ATP when the F(1)F(o)-ATP synthase enzyme acts as an ATP hydrolase. Indirectly acts as a regulator of heme synthesis in erythroid tissues: regulates heme synthesis by modulating the mitochondrial pH and redox potential, allowing FECH to efficiently catalyze the incorporation of iron into protoporphyrin IX to produce heme. The chain is ATPase inhibitor, mitochondrial from Rattus norvegicus (Rat).